The sequence spans 460 residues: Argininosuccinate lyase (460 aa).

It belongs to the lyase 1 family. Argininosuccinate lyase subfamily.

It localises to the cytoplasm. It catalyses the reaction 2-(N(omega)-L-arginino)succinate = fumarate + L-arginine. Its pathway is amino-acid biosynthesis; L-arginine biosynthesis; L-arginine from L-ornithine and carbamoyl phosphate: step 3/3. This Prosthecochloris aestuarii (strain DSM 271 / SK 413) protein is Argininosuccinate lyase.